Reading from the N-terminus, the 375-residue chain is Anhydro-N-acetylmuramic acid kinase 1 (375 aa).

20–27 serves as a coordination point for ATP; that stretch reads GTSFDGVD. Residues 351–375 are disordered; that stretch reads APSTTGVAAPVGGGRRSKPGARELS.

This sequence belongs to the anhydro-N-acetylmuramic acid kinase family.

The enzyme catalyses 1,6-anhydro-N-acetyl-beta-muramate + ATP + H2O = N-acetyl-D-muramate 6-phosphate + ADP + H(+). It functions in the pathway amino-sugar metabolism; 1,6-anhydro-N-acetylmuramate degradation. It participates in cell wall biogenesis; peptidoglycan recycling. Functionally, catalyzes the specific phosphorylation of 1,6-anhydro-N-acetylmuramic acid (anhMurNAc) with the simultaneous cleavage of the 1,6-anhydro ring, generating MurNAc-6-P. Is required for the utilization of anhMurNAc either imported from the medium or derived from its own cell wall murein, and thus plays a role in cell wall recycling. This is Anhydro-N-acetylmuramic acid kinase 1 from Jannaschia sp. (strain CCS1).